A 463-amino-acid polypeptide reads, in one-letter code: Probable ECA polymerase (463 aa).

A run of 11 helical transmembrane segments spans residues 6 to 26, 39 to 59, 65 to 85, 112 to 132, 154 to 174, 180 to 200, 201 to 221, 222 to 242, 340 to 360, 377 to 397, and 408 to 428; these read FGGLFVVYLISVIFILSLTWM, FSLLYLLTFYFGFPFTCVLVF, VVPVQFLLQAMLSATAFYAIY, ANLTWLLLALIAVATVGIFFL, GVALKRFFYFFIPAMLVVYFL, AWLMFLIGTVAFGMLTYVIVG, GTRANLIIAFALFLFIGIVRG, WITLWMLVAAGAFGIVGMFWL, LVVMGGVLFIPLGAIAVGLVI, YKAAILQAFCFGAVFNIIVLT, and VVFFCLVFGLCLLVAKLLYWL.

The protein belongs to the WzyE family. As to quaternary structure, probably part of a complex composed of WzxE, WzyE and WzzE.

It localises to the cell inner membrane. Its pathway is bacterial outer membrane biogenesis; enterobacterial common antigen biosynthesis. Its function is as follows. Probably involved in the polymerization of enterobacterial common antigen (ECA) trisaccharide repeat units. In Pectobacterium carotovorum subsp. carotovorum (strain PC1), this protein is Probable ECA polymerase.